A 216-amino-acid polypeptide reads, in one-letter code: Pyrophosphatase PpaX (216 aa).

Aspartate 12 (nucleophile) is an active-site residue.

Belongs to the HAD-like hydrolase superfamily. PpaX family. Mg(2+) is required as a cofactor.

It carries out the reaction diphosphate + H2O = 2 phosphate + H(+). Hydrolyzes pyrophosphate formed during P-Ser-HPr dephosphorylation by HPrK/P. Might play a role in controlling the intracellular pyrophosphate pool. This Bacillus pumilus (strain SAFR-032) protein is Pyrophosphatase PpaX.